Here is a 119-residue protein sequence, read N- to C-terminus: Large ribosomal subunit protein uL18 (119 aa).

It belongs to the universal ribosomal protein uL18 family. In terms of assembly, part of the 50S ribosomal subunit; part of the 5S rRNA/L5/L18/L25 subcomplex. Contacts the 5S and 23S rRNAs.

Functionally, this is one of the proteins that bind and probably mediate the attachment of the 5S RNA into the large ribosomal subunit, where it forms part of the central protuberance. The protein is Large ribosomal subunit protein uL18 of Xanthomonas campestris pv. campestris (strain 8004).